A 1226-amino-acid polypeptide reads, in one-letter code: Cytosolic carboxypeptidase 1 (1226 aa).

Positions 599 to 619 (TEDDEDTESNSSVEQASVEVP) are disordered. Residues 848–1138 (YPYTYSTLQM…KFCVGLLRLK (291 aa)) enclose the Peptidase M14 domain. Histidine 920, glutamate 923, and histidine 1017 together coordinate Zn(2+). Glutamate 1102 (proton donor/acceptor) is an active-site residue. At serine 1168 the chain carries Phosphoserine. The segment at 1206–1226 (YEPSAQEEVLSDSELSRTYLP) is disordered.

Belongs to the peptidase M14 family. Interacts with MYLK. Requires Zn(2+) as cofactor.

The protein localises to the cytoplasm. Its subcellular location is the cytosol. It localises to the nucleus. It is found in the mitochondrion. The catalysed reaction is (L-glutamyl)(n+1)-gamma-L-glutamyl-L-glutamyl-[protein] + H2O = (L-glutamyl)(n)-gamma-L-glutamyl-L-glutamyl-[protein] + L-glutamate. It carries out the reaction C-terminal L-alpha-aminoacyl-L-glutamyl-L-glutamyl-[tubulin] + H2O = C-terminal L-alpha-aminoacyl-L-glutamyl-[tubulin] + L-glutamate. In terms of biological role, metallocarboxypeptidase that mediates protein deglutamylation of tubulin and non-tubulin target proteins. Catalyzes the removal of polyglutamate side chains present on the gamma-carboxyl group of glutamate residues within the C-terminal tail of alpha- and beta-tubulin. Specifically cleaves tubulin long-side-chains, while it is not able to remove the branching point glutamate. Also catalyzes the removal of polyglutamate residues from the carboxy-terminus of alpha-tubulin as well as non-tubulin proteins such as MYLK. Involved in KLF4 deglutamylation which promotes KLF4 proteasome-mediated degradation, thereby negatively regulating cell pluripotency maintenance and embryogenesis. The sequence is that of Cytosolic carboxypeptidase 1 from Homo sapiens (Human).